Reading from the N-terminus, the 599-residue chain is Proline--tRNA ligase (599 aa).

This sequence belongs to the class-II aminoacyl-tRNA synthetase family. ProS type 1 subfamily. In terms of assembly, homodimer.

The protein resides in the cytoplasm. The enzyme catalyses tRNA(Pro) + L-proline + ATP = L-prolyl-tRNA(Pro) + AMP + diphosphate. Functionally, catalyzes the attachment of proline to tRNA(Pro) in a two-step reaction: proline is first activated by ATP to form Pro-AMP and then transferred to the acceptor end of tRNA(Pro). As ProRS can inadvertently accommodate and process non-cognate amino acids such as alanine and cysteine, to avoid such errors it has two additional distinct editing activities against alanine. One activity is designated as 'pretransfer' editing and involves the tRNA(Pro)-independent hydrolysis of activated Ala-AMP. The other activity is designated 'posttransfer' editing and involves deacylation of mischarged Ala-tRNA(Pro). The misacylated Cys-tRNA(Pro) is not edited by ProRS. This Bifidobacterium animalis subsp. lactis (strain AD011) protein is Proline--tRNA ligase.